Reading from the N-terminus, the 418-residue chain is MTNSIEQAWDLAKQRFAAVGVDVDAALTRLDTLPVSMHCWQGDDVTGFEDPDGVLTGGIQATGNYPGKARNATELRSDLELALALIPGPKRLNLHAIYLESDTPVARNKIEPRHFSHWVAWAKKHQLGLDFNPSCFSHPLSADGFTLSHADPEIRQFWIEHCQASRRVSAYFGEQLGTPSVMNIWIPDGMKDTPIDRLAPRQRLLSALDEVISEKLNPAHHIDAVESKLFGIGAESYTVGSNEFYMGYAASRQTALCLDAGHFHPTEVISDKISSAMLYVPRLLLHVSRPVRWDSDHVVLLDDETQAIASEIIRHNLFDRVHIGLDFFDASINRIAAWVIGTRNMKKALLRALLEPTDRLRQLELRGDYTARLALLEEQKSLPWQAIWEGYCQRNDVPVDARWLDAVREYEQQILSQR.

Histidine 262, aspartate 294, and aspartate 296 together coordinate Mn(2+).

It belongs to the rhamnose isomerase family. As to quaternary structure, homotetramer. Mn(2+) is required as a cofactor.

It is found in the cytoplasm. The enzyme catalyses L-rhamnopyranose = L-rhamnulose. Its pathway is carbohydrate degradation; L-rhamnose degradation; glycerone phosphate from L-rhamnose: step 1/3. Functionally, catalyzes the interconversion of L-rhamnose and L-rhamnulose. In Yersinia pestis bv. Antiqua (strain Antiqua), this protein is L-rhamnose isomerase.